We begin with the raw amino-acid sequence, 430 residues long: Adenylosuccinate synthetase (430 aa).

Residues 17 to 23 (GDEGKGK) and 45 to 47 (GHT) each bind GTP. The active-site Proton acceptor is the Asp18. Mg(2+) is bound by residues Asp18 and Gly45. Residues 18-21 (DEGK), 43-46 (NAGH), Thr139, Arg153, Asn229, Thr244, and Arg308 contribute to the IMP site. His46 acts as the Proton donor in catalysis. 304 to 310 (TVTGRRR) is a binding site for substrate. GTP-binding positions include Arg310, 336 to 338 (KLD), and 418 to 420 (GVG).

This sequence belongs to the adenylosuccinate synthetase family. In terms of assembly, homodimer. The cofactor is Mg(2+).

The protein resides in the cytoplasm. It carries out the reaction IMP + L-aspartate + GTP = N(6)-(1,2-dicarboxyethyl)-AMP + GDP + phosphate + 2 H(+). It participates in purine metabolism; AMP biosynthesis via de novo pathway; AMP from IMP: step 1/2. In terms of biological role, plays an important role in the de novo pathway and in the salvage pathway of purine nucleotide biosynthesis. Catalyzes the first committed step in the biosynthesis of AMP from IMP. The chain is Adenylosuccinate synthetase from Cryptococcus neoformans var. neoformans serotype D (strain JEC21 / ATCC MYA-565) (Filobasidiella neoformans).